Here is a 426-residue protein sequence, read N- to C-terminus: Enolase (426 aa).

Glutamine 163 contributes to the (2R)-2-phosphoglycerate binding site. Glutamate 205 serves as the catalytic Proton donor. Mg(2+) is bound by residues aspartate 242, glutamate 285, and aspartate 312. 4 residues coordinate (2R)-2-phosphoglycerate: lysine 337, arginine 366, serine 367, and lysine 388. Lysine 337 acts as the Proton acceptor in catalysis.

This sequence belongs to the enolase family. It depends on Mg(2+) as a cofactor.

It localises to the cytoplasm. The protein resides in the secreted. The protein localises to the cell surface. It carries out the reaction (2R)-2-phosphoglycerate = phosphoenolpyruvate + H2O. The protein operates within carbohydrate degradation; glycolysis; pyruvate from D-glyceraldehyde 3-phosphate: step 4/5. Its function is as follows. Catalyzes the reversible conversion of 2-phosphoglycerate (2-PG) into phosphoenolpyruvate (PEP). It is essential for the degradation of carbohydrates via glycolysis. This is Enolase from Phenylobacterium zucineum (strain HLK1).